Here is a 198-residue protein sequence, read N- to C-terminus: T-cell surface glycoprotein CD3 epsilon chain (198 aa).

The first 21 residues, 1-21 (MRAGTLWRVLALWLLSVAAWG), serve as a signal peptide directing secretion. Over 22–120 (QEDDDHADDY…EACMEVDLTT (99 aa)) the chain is Extracellular. An Ig-like domain is found at 28-106 (ADDYTQKLFT…KENEHILYLK (79 aa)). A disulfide bridge connects residues C49 and C90. A helical transmembrane segment spans residues 121–141 (VASIVVADVCVTLGLLLLVYY). Topologically, residues 142 to 198 (WSKNRKAKCKPVTRGAGAGGRPRGQNKERPPPVPNPDYEPIRKGQRDLYSGLNQRGI) are cytoplasmic. Residues 153-198 (VTRGAGAGGRPRGQNKERPPPVPNPDYEPIRKGQRDLYSGLNQRGI) are disordered. An NUMB-binding region region spans residues 166 to 183 (QNKERPPPVPNPDYEPIR). Residues 169 to 196 (ERPPPVPNPDYEPIRKGQRDLYSGLNQR) form the ITAM domain. The segment at 170 to 177 (RPPPVPNP) is proline-rich sequence. Phosphotyrosine is present on residues Y179 and Y190.

As to quaternary structure, the TCR-CD3 complex is composed of a CD3D/CD3E and a CD3G/CD3E heterodimers that preferentially associate with TCRalpha and TCRbeta, respectively, to form TCRalpha/CD3E/CD3G and TCRbeta/CD3G/CD3E trimers. In turn, the hexamer interacts with CD3Z homodimer to form the TCR-CD3 complex. Alternatively, TCRalpha and TCRbeta can be replaced by TCRgamma and TCRdelta. Interacts with CD6. Interacts (via Proline-rich sequence) with NCK1; the interaction is ligand dependent but independent of tyrosine kinase activation. Phosphorylated on Tyr residues after T-cell receptor triggering by LCK in association with CD4/CD8.

It localises to the cell membrane. In terms of biological role, part of the TCR-CD3 complex present on T-lymphocyte cell surface that plays an essential role in adaptive immune response. When antigen presenting cells (APCs) activate T-cell receptor (TCR), TCR-mediated signals are transmitted across the cell membrane by the CD3 chains CD3D, CD3E, CD3G and CD3Z. All CD3 chains contain immunoreceptor tyrosine-based activation motifs (ITAMs) in their cytoplasmic domain. Upon TCR engagement, these motifs become phosphorylated by Src family protein tyrosine kinases LCK and FYN, resulting in the activation of downstream signaling pathways. In addition of this role of signal transduction in T-cell activation, CD3E plays an essential role in correct T-cell development. Also participates in internalization and cell surface down-regulation of TCR-CD3 complexes via endocytosis sequences present in CD3E cytosolic region. In addition to its role as a TCR coreceptor, it serves as a receptor for ITPRIPL1. Ligand recognition inhibits T-cell activation by promoting interaction with NCK1, which prevents CD3E-ZAP70 interaction and blocks the ERK-NFkB signaling cascade and calcium influx. In Oryctolagus cuniculus (Rabbit), this protein is T-cell surface glycoprotein CD3 epsilon chain (CD3E).